The primary structure comprises 323 residues: MASIWVGPRGTIKDYPGFSPSVDAEAIRKAIRGLGTDEKTLINILTERSNAQRQLIVKQYQAAYEQELKDDLKGDLSGHFEHVMVALVTAPALFDAKQLKKSMKGTGTDEDALIEILTTRSSRQMKEISQAYYTVYKKSLGDDISSETSGDFRKALLTLADGRRDESLKVDEHLAKKDAQILYNAGENKWGTDEDKFTEVLCLRSFPQLKLTFDEYRNISQKDIEDSIKGELSGHFEDLLLAIVHCARNTPAFLAERLHQALKGAGTDEFTLNRIMVSRSEIDLLDIRHEFKKHYGYSLYSAIQSDTSGDYRTVLLKICGEDD.

Residue Ala2 is modified to N-acetylalanine. Annexin repeat units follow at residues Phe18–Thr89, Ala90–Asp161, His173–His245, and Asn249–Gly320. At Lys177 the chain carries N6-acetyllysine. Position 267 is a phosphothreonine (Thr267).

It belongs to the annexin family.

Functionally, inhibitor of phospholipase A2, also possesses anti-coagulant properties. This is Annexin A3 (Anxa3) from Mus musculus (Mouse).